We begin with the raw amino-acid sequence, 893 residues long: MAGHHHEHEQERDHEQEHEHDSLQRPTTGSERTRSISFSKLLTRSWKRNASSSNNMSVSSVNLYSDPENSRESDHNNSGSEGQSSRFSKLKSMFQSGNSSKNASAHNSSQSSLEGDSASSSSKLRYVKPMTSVANASPASPPLSPTIPETDVLQTPKMVHIDQHEHEREHSNCGSPIMLSSSSFSPTVARTGTGRRRSPSTPIMPSQNSNNSSSTSAIRPNNYRHHSGSQGFSSNNPFRERAGTVRSSNPYFAYQGLPTHAMSSHDLDEGFQPYANGSGIHFLSTPTSKTNSLTNTKNLSNLSLNEIKENEEVQEFNNEDFFFHDIPKDLSLKDTLNGSPSRGSSKSPTITQTFPSIIVGFDNEYEEDNNNDKHDEKEEQQTTTDNKTRNLSPTKQNGKATHPRIKIPLRRAASEPNGLQLASATSPTSSSARKTSGSSNINDKIPGQSVPPPNSFFPQEPSPKISDFPEPRRSRRLRTKSFSNKFQDIMVGPQSFEKIRLLGQGDVGKVFLVREKKTNRVYALKVLSKDEMIKRNKIKRVLTEQEILATSNHPFIVTLYHSFQSEDYLYLCMEYCMGGEFFRALQTRKTKCICEDDARFYASEVTAALEYLHLLGFIYRDLKPENILLHQSGHIMLSDFDLSIQAKDSKVPVVKGSAQSTLVDTKICSDGFRTNSFVGTEEYIAPEVIRGNGHTAAVDWWTLGILIYEMLFGFTPFKGDNTNETFTNILKNEVSFPNNNEISRTCKDLIKKLLTKNESKRLGCKMGAADVKKHPFFKKVQWSLLRNQEPPLIPVLSEDGYDFAKLSSNKKRQTSQDSHKHLDEQEKNMFEERVEYDDEVSEDDPFHDFNSMSLMEQDNNSMIYGNTNSYGKIAYTPNSNRSRSNSHRTFFKR.

Positions 1–23 are enriched in basic and acidic residues; sequence MAGHHHEHEQERDHEQEHEHDSL. Disordered stretches follow at residues 1 to 124, 129 to 148, and 163 to 243; these read MAGH…SSKL, PMTS…PTIP, and QHEH…ERAG. Residues 24-42 are compositionally biased toward polar residues; that stretch reads QRPTTGSERTRSISFSKLL. Residues 49–62 show a composition bias toward low complexity; it reads NASSSNNMSVSSVN. Positions 76-87 are enriched in polar residues; sequence NNSGSEGQSSRF. Positions 96 to 122 are enriched in low complexity; the sequence is SGNSSKNASAHNSSQSSLEGDSASSSS. 5 positions are modified to phosphoserine: S140, S144, S171, S175, and S185. The span at 206 to 216 shows a compositional bias: low complexity; the sequence is SQNSNNSSSTS. Residues 228–237 are compositionally biased toward polar residues; sequence GSQGFSSNNP. S300 is modified (phosphoserine). The segment covering 334–355 has biased composition (polar residues); that stretch reads DTLNGSPSRGSSKSPTITQTFP. Positions 334 to 480 are disordered; that stretch reads DTLNGSPSRG…PRRSRRLRTK (147 aa). The segment covering 370–380 has biased composition (basic and acidic residues); that stretch reads NNDKHDEKEEQ. The segment covering 381–399 has biased composition (polar residues); the sequence is QTTTDNKTRNLSPTKQNGK. Position 414 is a phosphoserine (S414). A compositionally biased stretch (low complexity) spans 422 to 439; that stretch reads ASATSPTSSSARKTSGSS. At S462 the chain carries Phosphoserine. One can recognise a Protein kinase domain in the interval 496–777; sequence FEKIRLLGQG…AADVKKHPFF (282 aa). ATP is bound by residues 502–510 and K525; that span reads LGQGDVGKV. D621 serves as the catalytic Proton acceptor. The AGC-kinase C-terminal domain occupies 778-861; that stretch reads KKVQWSLLRN…MSLMEQDNNS (84 aa). Residues 874-893 are disordered; sequence AYTPNSNRSRSNSHRTFFKR. Residues 884–893 show a composition bias toward basic residues; it reads SNSHRTFFKR.

It belongs to the protein kinase superfamily. Ser/Thr protein kinase family. KIN82 subfamily. In terms of processing, the N-terminal non-catalytic domain is phosphorylated by YPK1.

Its subcellular location is the cytoplasm. It localises to the cell membrane. It carries out the reaction L-seryl-[protein] + ATP = O-phospho-L-seryl-[protein] + ADP + H(+). The catalysed reaction is L-threonyl-[protein] + ATP = O-phospho-L-threonyl-[protein] + ADP + H(+). Down-regulated by YKP1 phosphorylation. This effect is counteracted in the presence of mannosyl-inositolphosphorylceramide (MIPC). Its function is as follows. Flippase activator that phosphorylates DNF1 and DNF2 and which is involved in the generation of phospholipid asymmetry in membranes by the inward translocation of phospholipids and in the retrieval pathway from early endosomes to the trans-Golgi network (TGN). Also phosphorylates the N-terminal half of YPK1. Involved in pheromone-response. The sequence is that of Flippase kinase 1 (FPK1) from Saccharomyces cerevisiae (strain ATCC 204508 / S288c) (Baker's yeast).